Reading from the N-terminus, the 378-residue chain is Tyrosinase-like protein phomQ1' (378 aa).

A helical transmembrane segment spans residues 42 to 62 (TIIVVSVITFAAIIGCWVFLS). The Cu cation site is built by H130 and H139. Residue N209 is glycosylated (N-linked (GlcNAc...) asparagine). Residues H279 and H305 each coordinate Cu cation.

Belongs to the tyrosinase family. The cofactor is Cu(2+).

It is found in the membrane. Its pathway is mycotoxin biosynthesis. In terms of biological role, tyrosinase-like protein; part of the gene cluster that mediates the biosynthesis of the phomopsins, a group of hexapeptide mycotoxins which infects lupins and causes lupinosis disease in livestock. The pathway starts with the processing of the precursor phomA' by several endopeptidases including kexin proteases as well as the cluster-specific S41 family peptidase phomP1 and the oligopeptidase phomG' to produce 10 identical copies of the hexapeptide Tyr-Val-Ile-Pro-Ile-Asp. After being excised from the precursor peptide, the core peptides are cyclized and modified post-translationally by enzymes encoded within the gene cluster. The timing and order of proteolysis of the phomA' precursor and PTMs are still unknown. Two tyrosinase-like enzymes, phomQ1' and phomQ2, catalyze the chlorination and hydroxylation of Tyr, respectively. PhomYb, is proposed to be involved in the construction of the macrocyclic structure. The other 4 ustYa family proteins may be involved in PTMs that generate the unique structure of phomopsin A. PhomYa' is required for the hydroxylation of C-beta of Tyr. PhomYc', phomYd', and phomYe are responsible for the biosynthesis of 2,3-dehydroisoleucine (dIle), 2,3-dehydroaspartic acid (dAsp), and 3,4-dehydroproline (dPro), respectively. While dIle formation by phomYc' is indispensable for the installation of dAsp by phomYd', the order of the other PTMs have not been elucidated yet. Most of the biosynthetic enzymes likely have broad substrate specificity, and thus, there might be a metabolic grid from a precursor to phomopsin A. The enzyme(s) responsible for the biosynthesis of 3,4-dehydrovaline (dVal) have also not been identified yet. Finally, phomM' acts as an S-adenosylmethionine-dependent alpha-N-methyltransferase that catalyzes two successive N-methylation reactions, converting N-desmethyl-phomopsin A to phomopsin A and phomopsin A further to an N,N-dimethylated congener called phomopsin E. In Diaporthe leptostromiformis (Lupinosis disease fungus), this protein is Tyrosinase-like protein phomQ1'.